Here is a 253-residue protein sequence, read N- to C-terminus: Pro-opiomelanocortin A (253 aa).

An N-terminal signal peptide occupies residues 1 to 21 (MLCPAWLLAVAVVGVVRGVKG). Position 22 is a pyrrolidone carboxylic acid (Q22). Intrachain disulfides connect C23-C45 and C29-C41. Position 104 is an N-acetylserine; in Corticotropin (S104). V116 is subject to Valine amide. A disordered region spans residues 228-253 (QKREQWGREEGEEKRALGERKYHFQG). A Glutamine amide; partial modification is found at Q252.

The protein belongs to the POMC family. Specific enzymatic cleavages at paired basic residues yield the different active peptides. In terms of processing, acetylation of beta-endorphin occurs in a tissue-specific manner. As to expression, C-terminal peptide 1 and C-terminal peptide 2 are detected in the anterior part of the nucleus lateralis tuberis of hypothalamus, in dorsal hypothalamus, thalamus, telencephalon, optic tectum and medulla oblongata (at protein level). Expressed in pituitary and hypothalamus of adult diploid animals, and hypothalamus of triploid and ovulated female trout.

Its subcellular location is the secreted. In terms of biological role, stimulates the adrenal glands to release cortisol. Functionally, melanocyte-stimulating hormone alpha: Anorexigenic peptide. Increases the pigmentation of skin by increasing melanin production in melanocytes. Its function is as follows. Melanocyte-stimulating hormone beta: Increases the pigmentation of skin by increasing melanin production in melanocytes. Beta-endorphin: Endogenous orexigenic opiate. In terms of biological role, endogenous opiate. The sequence is that of Pro-opiomelanocortin A (pomca) from Oncorhynchus mykiss (Rainbow trout).